Here is a 915-residue protein sequence, read N- to C-terminus: Protein MEI2-like 1 (915 aa).

Positions 1–90 (MPSDIMEQRG…NTTNGSQWES (90 aa)) are disordered. Basic and acidic residues predominate over residues 16-25 (HFHEDIHITS). Over residues 50-65 (MPKSSWTSESYQLKPQ) the composition is skewed to polar residues. The segment covering 66-77 (SSFSGSHPSGSP) has biased composition (low complexity). A Phosphoserine modification is found at S76. A compositionally biased stretch (polar residues) spans 78 to 89 (NARNTTNGSQWE). 2 consecutive RRM domains span residues 217–290 (RTLL…YSIS) and 302–375 (GALL…PTYP). 2 disordered regions span residues 690–723 (PGRS…SSSN) and 854–915 (LFHT…LKEN). Basic and acidic residues predominate over residues 705 to 723 (PNERYRNLSHRRSESSSSN). Residues 882-898 (RSSSIDNYNSFSISSVS) show a composition bias toward polar residues.

As to expression, expressed in roots, shoots, leaves, flowers and siliques.

Functionally, probable RNA-binding transcriptional activator that plays a role in meiosis and vegetative growth. May be a downstream effector of TOR signaling pathway and recruited by RAPTOR1 for TOR substrate. In Arabidopsis thaliana (Mouse-ear cress), this protein is Protein MEI2-like 1 (ML1).